A 1266-amino-acid polypeptide reads, in one-letter code: Formin-like protein 13 (1266 aa).

The 185-residue stretch at 9–193 (YRKPPDGLLE…QYVSRRNLVS (185 aa)) folds into the Phosphatase tensin-type domain. Cys126 functions as the Phosphocysteine intermediate in the catalytic mechanism. The region spanning 199 to 337 (DRALTMDCVI…FRVELLFSDM (139 aa)) is the C2 tensin-type domain. Disordered regions lie at residues 497–568 (KPLV…LQHS), 597–825 (KNLI…GKGR), 881–902 (SASA…PKPE), and 1210–1266 (QLEA…RTAP). The span at 529 to 538 (PPTPSPPHPV) shows a compositional bias: pro residues. Positions 617-644 (EPSSKTTNSLLLSPQASPATPTNPSKTV) are enriched in polar residues. Composition is skewed to pro residues over residues 686-698 (LPRP…PPPM), 706-742 (VPPP…PPTP), 754-781 (PPAP…PPPL), and 806-815 (PNVPPTPALP). The FH2 domain occupies 829–1226 (VNLKNSPAKK…KNAAEKEKPK (398 aa)). Composition is skewed to basic and acidic residues over residues 889 to 902 (GKSR…PKPE), 1210 to 1248 (QLEA…EKTK), and 1255 to 1266 (EMSDRLKERTAP).

This sequence belongs to the formin-like family. Class-II subfamily.

This chain is Formin-like protein 13 (FH13), found in Arabidopsis thaliana (Mouse-ear cress).